A 141-amino-acid chain; its full sequence is Hemoglobin subunit alpha-D (141 aa).

The Globin domain occupies 1 to 141; it reads MLSADEKQLI…VSDVLAEKYR (141 aa). Heme b-binding residues include histidine 58 and histidine 87.

It belongs to the globin family. Heterotetramer of two alpha-D chains and two beta chains. As to expression, red blood cells.

Functionally, involved in oxygen transport from the lung to the various peripheral tissues. The sequence is that of Hemoglobin subunit alpha-D (HBAD) from Phrynops hilarii (Snake-necked turtle).